A 213-amino-acid polypeptide reads, in one-letter code: Thiamine-phosphate synthase (213 aa).

4-amino-2-methyl-5-(diphosphooxymethyl)pyrimidine-binding positions include 40 to 44 (QYRDK) and asparagine 72. Mg(2+) is bound by residues aspartate 73 and aspartate 91. Residue threonine 110 coordinates 4-amino-2-methyl-5-(diphosphooxymethyl)pyrimidine. Residue 137-139 (SHT) coordinates 2-[(2R,5Z)-2-carboxy-4-methylthiazol-5(2H)-ylidene]ethyl phosphate. Lysine 140 is a 4-amino-2-methyl-5-(diphosphooxymethyl)pyrimidine binding site. Glycine 167 serves as a coordination point for 2-[(2R,5Z)-2-carboxy-4-methylthiazol-5(2H)-ylidene]ethyl phosphate.

This sequence belongs to the thiamine-phosphate synthase family. Requires Mg(2+) as cofactor.

It catalyses the reaction 2-[(2R,5Z)-2-carboxy-4-methylthiazol-5(2H)-ylidene]ethyl phosphate + 4-amino-2-methyl-5-(diphosphooxymethyl)pyrimidine + 2 H(+) = thiamine phosphate + CO2 + diphosphate. The catalysed reaction is 2-(2-carboxy-4-methylthiazol-5-yl)ethyl phosphate + 4-amino-2-methyl-5-(diphosphooxymethyl)pyrimidine + 2 H(+) = thiamine phosphate + CO2 + diphosphate. It carries out the reaction 4-methyl-5-(2-phosphooxyethyl)-thiazole + 4-amino-2-methyl-5-(diphosphooxymethyl)pyrimidine + H(+) = thiamine phosphate + diphosphate. Its pathway is cofactor biosynthesis; thiamine diphosphate biosynthesis; thiamine phosphate from 4-amino-2-methyl-5-diphosphomethylpyrimidine and 4-methyl-5-(2-phosphoethyl)-thiazole: step 1/1. Its function is as follows. Condenses 4-methyl-5-(beta-hydroxyethyl)thiazole monophosphate (THZ-P) and 2-methyl-4-amino-5-hydroxymethyl pyrimidine pyrophosphate (HMP-PP) to form thiamine monophosphate (TMP). The chain is Thiamine-phosphate synthase from Stutzerimonas stutzeri (strain A1501) (Pseudomonas stutzeri).